The sequence spans 184 residues: Large ribosomal subunit protein uL18 (184 aa).

Belongs to the universal ribosomal protein uL18 family. Part of the 50S ribosomal subunit. Contacts the 5S and 23S rRNAs.

This is one of the proteins that bind and probably mediate the attachment of the 5S RNA into the large ribosomal subunit, where it forms part of the central protuberance. In Haloferax mediterranei (strain ATCC 33500 / DSM 1411 / JCM 8866 / NBRC 14739 / NCIMB 2177 / R-4) (Halobacterium mediterranei), this protein is Large ribosomal subunit protein uL18.